Here is a 316-residue protein sequence, read N- to C-terminus: Glutamyl endopeptidase (316 aa).

Positions 1-30 are cleaved as a signal peptide; sequence MVSKKSVKRGLITGLIGISIYSLGMHPAQA. A propeptide spanning residues 31–94 is cleaved from the precursor; sequence APSPHTPVSS…SPAKAPYSIK (64 aa). Residues cysteine 126 and cysteine 142 are joined by a disulfide bond. Active-site charge relay system residues include histidine 141 and serine 261. An intrachain disulfide couples cysteine 275 to cysteine 279.

The protein belongs to the peptidase S1B family.

The protein resides in the secreted. It catalyses the reaction Preferential cleavage: Glu-|-Xaa, Asp-|-Xaa.. Specific for hydrolysis of peptide bonds on the carboxyl side of acidic amino acid residues, with a strong preference for Glu. The polypeptide is Glutamyl endopeptidase (blaSE) (Bacillus licheniformis (strain ATCC 14580 / DSM 13 / JCM 2505 / CCUG 7422 / NBRC 12200 / NCIMB 9375 / NCTC 10341 / NRRL NRS-1264 / Gibson 46)).